Consider the following 143-residue polypeptide: UPF0299 membrane protein CGSHiEE_04225 (143 aa).

4 helical membrane-spanning segments follow: residues 1 to 21, 33 to 52, 60 to 80, and 92 to 112; these read MIQKLFLLVRSLVILSIMLSL, VPGSIWGLLLLFLGLTTRVI, GASLLIRFMAVLFVPVSVGII, and ILLVPNIVSTCVTLLVIGFLG.

Belongs to the UPF0299 family.

Its subcellular location is the cell inner membrane. The sequence is that of UPF0299 membrane protein CGSHiEE_04225 from Haemophilus influenzae (strain PittEE).